The chain runs to 83 residues: Bowman-Birk type proteinase inhibitor (83 aa).

Disulfide bonds link Cys-18–Cys-72, Cys-19–Cys-34, Cys-22–Cys-68, Cys-24–Cys-32, Cys-42–Cys-49, Cys-46–Cys-61, and Cys-51–Cys-59.

Belongs to the Bowman-Birk serine protease inhibitor family.

The sequence is that of Bowman-Birk type proteinase inhibitor from Phaseolus lunatus (Lima bean).